Here is a 459-residue protein sequence, read N- to C-terminus: Acetyltransferase pigO (459 aa).

It belongs to the trichothecene O-acetyltransferase family.

The protein operates within secondary metabolite biosynthesis. Functionally, acetyltransferase; part of the gene cluster that mediates the biosynthesis of azaphilone pigments (MonAzPs), a complex mixture of compounds with a common azaphilone skeleton very widely used as food colorants. PigM and pigO are involved in the elimination of the omega-1 alcohol with pigM acting as an O-acetyltransferase that synthesizes the O-11 acetyl intermediate whereas pigO eliminates acetic acid to yield an intermediate with a C10(11) double bond. The first step of the pathway is performed by the nrPKS pigA that forms the hexaketide precursor from successive condensations of five malonyl-CoA units, with a simple acetyl-CoA starter unit. The role of esterase pigG is not clear, but it may play at most a supplementary role in the formation of the benzaldehyde produced by the pigA nrPKS. This very reactive benzaldehyde is intercepted by the pigC ketoreductase that to provide the first stable enzyme-free MonAzPs intermediate, 6-(4-hydroxy-2-oxopentyl)-3-methyl-2,4-dioxocyclohexane carbaldehyde, also known as M7PKS-1. The FAD-dependent monooxygenase pigN hydroxylates M7PKS-1 at C-4, which triggers the formation of the pyran ring. PigJ, pigK and pigD are involved in the acetylation of the pyran ring. PigJ and pigK form the two subunits of a dedicated fungal FAS that produces the side chain fatty acyl moiety of MonAzPs and pigD transfers the fatty acyl chain to the C-4 alcohol. PigM and pigO are involved in the elimination of the omega-1 alcohol. PigM acts as an O-acetyltransferase that synthesizes the putative O-11 acetyl intermediate whereas pigO eliminates acetic acid to yield an intermediate with a C10(11) double bond. The dehydration of the C-11 alcohol followed by the reduction of the C6(7) double bond by the NAD(P)H-dependent oxidoreductase pigE increases the electrophilicity of the C-5 ketone of the resulting acyl benzopyran. This in turn sets up the C-5 ketone for an intramolecular Knoevenagel aldol condensation with the C-20 enol of the side chain. This condensation affords the characteristic linear tricyclic carbon skeletons of the yellow pigments that serve as the common precursors for the classical yellow pigments monascin and ankaflavin, orange pigments rubopunctatin and monascorubrin, and red pigments ribropunctamine and monascorubramine. The FAD-dependent oxidoreductase pigF is especially invoved in the biosynthesis of orange and red pigments via desaturation of C6(7). The sequence is that of Acetyltransferase pigO from Monascus ruber (Mold).